We begin with the raw amino-acid sequence, 63 residues long: Large ribosomal subunit protein bL28 (63 aa).

It belongs to the bacterial ribosomal protein bL28 family.

The polypeptide is Large ribosomal subunit protein bL28 (Geotalea daltonii (strain DSM 22248 / JCM 15807 / FRC-32) (Geobacter daltonii)).